The chain runs to 658 residues: UvrABC system protein B (658 aa).

A Helicase ATP-binding domain is found at 26-413 (EGINSGKKKQ…SPEVIEQIIR (388 aa)). 39–46 (GATGTGKT) serves as a coordination point for ATP. The Beta-hairpin motif lies at 92–115 (YYDYYQPEAYVPQTDTFIEKDAQI). The Helicase C-terminal domain maps to 430–596 (QIDDLLGEIQ…TIQKGVRDVI (167 aa)). The 36-residue stretch at 622 to 657 (EKTIAKMEAEMKEAAKALDFERAAELRDLLLELKAE) folds into the UVR domain.

Belongs to the UvrB family. In terms of assembly, forms a heterotetramer with UvrA during the search for lesions. Interacts with UvrC in an incision complex.

It is found in the cytoplasm. Functionally, the UvrABC repair system catalyzes the recognition and processing of DNA lesions. A damage recognition complex composed of 2 UvrA and 2 UvrB subunits scans DNA for abnormalities. Upon binding of the UvrA(2)B(2) complex to a putative damaged site, the DNA wraps around one UvrB monomer. DNA wrap is dependent on ATP binding by UvrB and probably causes local melting of the DNA helix, facilitating insertion of UvrB beta-hairpin between the DNA strands. Then UvrB probes one DNA strand for the presence of a lesion. If a lesion is found the UvrA subunits dissociate and the UvrB-DNA preincision complex is formed. This complex is subsequently bound by UvrC and the second UvrB is released. If no lesion is found, the DNA wraps around the other UvrB subunit that will check the other stand for damage. The chain is UvrABC system protein B from Bacillus anthracis.